The following is a 181-amino-acid chain: Large ribosomal subunit protein uL6 (181 aa).

Belongs to the universal ribosomal protein uL6 family. As to quaternary structure, part of the 50S ribosomal subunit.

This protein binds to the 23S rRNA, and is important in its secondary structure. It is located near the subunit interface in the base of the L7/L12 stalk, and near the tRNA binding site of the peptidyltransferase center. This chain is Large ribosomal subunit protein uL6, found in Rhodopirellula baltica (strain DSM 10527 / NCIMB 13988 / SH1).